The primary structure comprises 167 residues: Large ribosomal subunit protein uL10 (167 aa).

This sequence belongs to the universal ribosomal protein uL10 family. In terms of assembly, part of the ribosomal stalk of the 50S ribosomal subunit. The N-terminus interacts with L11 and the large rRNA to form the base of the stalk. The C-terminus forms an elongated spine to which L12 dimers bind in a sequential fashion forming a multimeric L10(L12)X complex.

Its function is as follows. Forms part of the ribosomal stalk, playing a central role in the interaction of the ribosome with GTP-bound translation factors. The chain is Large ribosomal subunit protein uL10 from Yersinia enterocolitica serotype O:8 / biotype 1B (strain NCTC 13174 / 8081).